The primary structure comprises 433 residues: Glutamyl-tRNA reductase (433 aa).

Substrate is bound by residues Thr-49–Arg-52, Ser-109, Glu-114–Gln-116, and Gln-120. Cys-50 acts as the Nucleophile in catalysis. Gly-189 to Ser-194 provides a ligand contact to NADP(+).

It belongs to the glutamyl-tRNA reductase family. Homodimer.

The catalysed reaction is (S)-4-amino-5-oxopentanoate + tRNA(Glu) + NADP(+) = L-glutamyl-tRNA(Glu) + NADPH + H(+). The protein operates within porphyrin-containing compound metabolism; protoporphyrin-IX biosynthesis; 5-aminolevulinate from L-glutamyl-tRNA(Glu): step 1/2. It functions in the pathway porphyrin-containing compound metabolism; chlorophyll biosynthesis. Its function is as follows. Catalyzes the NADPH-dependent reduction of glutamyl-tRNA(Glu) to glutamate 1-semialdehyde (GSA). The polypeptide is Glutamyl-tRNA reductase (Acaryochloris marina (strain MBIC 11017)).